The following is a 369-amino-acid chain: Cystathionine gamma-synthase (369 aa).

An N6-(pyridoxal phosphate)lysine modification is found at lysine 200.

It belongs to the trans-sulfuration enzymes family. As to quaternary structure, homotetramer. Pyridoxal 5'-phosphate serves as cofactor.

The protein resides in the cytoplasm. The catalysed reaction is O-succinyl-L-homoserine + L-cysteine = L,L-cystathionine + succinate + H(+). Catalyzes the formation of L-cystathionine from O-succinyl-L-homoserine (OSHS) and L-cysteine, via a gamma-replacement reaction. In the absence of thiol, catalyzes gamma-elimination to form 2-oxobutanoate, succinate and ammonia. The chain is Cystathionine gamma-synthase (metB) from Haemophilus influenzae (strain ATCC 51907 / DSM 11121 / KW20 / Rd).